Here is a 145-residue protein sequence, read N- to C-terminus: Deoxyuridine 5'-triphosphate nucleotidohydrolase (145 aa).

Substrate is bound by residues 63–65, Asn-76, 80–82, and Lys-90; these read RSG and TID.

Belongs to the dUTPase family. The cofactor is Mg(2+).

It catalyses the reaction dUTP + H2O = dUMP + diphosphate + H(+). Its pathway is pyrimidine metabolism; dUMP biosynthesis; dUMP from dCTP (dUTP route): step 2/2. This enzyme is involved in nucleotide metabolism: it produces dUMP, the immediate precursor of thymidine nucleotides and it decreases the intracellular concentration of dUTP so that uracil cannot be incorporated into DNA. This is Deoxyuridine 5'-triphosphate nucleotidohydrolase from Clostridium acetobutylicum (strain ATCC 824 / DSM 792 / JCM 1419 / IAM 19013 / LMG 5710 / NBRC 13948 / NRRL B-527 / VKM B-1787 / 2291 / W).